A 1557-amino-acid chain; its full sequence is Ras guanine nucleotide exchange factor K (1557 aa).

Residues 1 to 16 (MEPTINPPVNLPPPVP) are compositionally biased toward pro residues. 6 disordered regions span residues 1 to 121 (MEPT…SYTV), 146 to 181 (VETL…KLSV), 195 to 238 (LYQQ…SPQL), 283 to 347 (SPLP…GLTP), 558 to 619 (NNNN…DELS), and 881 to 937 (TNNN…QVNH). Low complexity-rich tracts occupy residues 17-40 (SRSN…NNTN), 52-63 (SSPSSPSSPSPS), 73-90 (NNNN…NGNV), 102-114 (ISSP…HTSS), 148-161 (TLSS…KTTT), 195-207 (LYQQ…NPNS), and 222-236 (PPSS…STSP). Pro residues predominate over residues 283–310 (SPLPPPPLTIPNKVPPLPMRLPPPPPPQ). 2 coiled-coil regions span residues 310–338 (QQLD…SNST) and 591–629 (NNNN…EEEL). Residues 311-333 (QLDQMYSNNNQQQQQQQQQQQNN) are compositionally biased toward low complexity. A compositionally biased stretch (polar residues) spans 334-343 (ESNSTTTSEG). Composition is skewed to low complexity over residues 558–610 (NNNN…NNNN) and 881–928 (TNNN…TPTT). Positions 1058 to 1177 (LNAEIDAATL…QIRNCILKRT (120 aa)) constitute an N-terminal Ras-GEF domain. The interval 1254 to 1303 (PSISQNTPSSPSLIPSSPRPITSSSSVSSSTLLKSPLSQQAKSRIPETKT) is disordered. Residues 1261-1291 (PSSPSLIPSSPRPITSSSSVSSSTLLKSPLS) are compositionally biased toward low complexity. The region spanning 1316 to 1549 (DDEEIARQLT…YHLSLLKEPR (234 aa)) is the Ras-GEF domain.

Its function is as follows. Promotes the exchange of Ras-bound GDP by GTP. This chain is Ras guanine nucleotide exchange factor K (gefK), found in Dictyostelium discoideum (Social amoeba).